A 162-amino-acid chain; its full sequence is Malaria protein EXP-1 (162 aa).

The first 22 residues, 1 to 22 (MKILSVFFLVLFFIIFNKESLA), serve as a signal peptide directing secretion. The helical transmembrane segment at 80–101 (VLAGLLGVVSTVLLGGVGLVLY) threads the bilayer. Residues 109 to 162 (PFKIGSSDPADNANPDADSESNGEPNADPQVTAQDVTPEQPQGDDNNLVSGPEH) are disordered. Over residues 114-130 (SSDPADNANPDADSESN) the composition is skewed to low complexity. The segment at 120–137 (NANPDADSESNGEPNADP) is epitope (deduced). A compositionally biased stretch (polar residues) spans 137-162 (PQVTAQDVTPEQPQGDDNNLVSGPEH).

The protein resides in the parasitophorous vacuole membrane. The protein is Malaria protein EXP-1 (EXP-1) of Plasmodium falciparum.